The sequence spans 100 residues: uncharacterized protein (100 aa).

It localises to the virion. This is an uncharacterized protein from Acanthamoeba polyphaga mimivirus (APMV).